The sequence spans 138 residues: Protein NrdI (138 aa).

Belongs to the NrdI family.

Probably involved in ribonucleotide reductase function. The chain is Protein NrdI from Paracoccus denitrificans (strain Pd 1222).